The sequence spans 332 residues: Ferrochelatase (332 aa).

Residues His-201 and Glu-283 each contribute to the Fe cation site.

It belongs to the ferrochelatase family.

The protein resides in the cytoplasm. It carries out the reaction heme b + 2 H(+) = protoporphyrin IX + Fe(2+). Its pathway is porphyrin-containing compound metabolism; protoheme biosynthesis; protoheme from protoporphyrin-IX: step 1/1. Catalyzes the ferrous insertion into protoporphyrin IX. In Francisella tularensis subsp. holarctica (strain FTNF002-00 / FTA), this protein is Ferrochelatase.